Reading from the N-terminus, the 91-residue chain is Putative septation protein SpoVG (91 aa).

Belongs to the SpoVG family.

Could be involved in septation. This is Putative septation protein SpoVG from Clostridium botulinum (strain Alaska E43 / Type E3).